A 675-amino-acid polypeptide reads, in one-letter code: DNA ligase (675 aa).

NAD(+)-binding positions include 36–40 (DAAYD), 85–86 (SL), and glutamate 117. The active-site N6-AMP-lysine intermediate is lysine 119. NAD(+)-binding residues include arginine 140, glutamate 177, lysine 294, and lysine 318. The Zn(2+) site is built by cysteine 412, cysteine 415, cysteine 430, and cysteine 436. Residues 597-675 (AEDLPLSGNT…EAEFLELIGE (79 aa)) enclose the BRCT domain.

This sequence belongs to the NAD-dependent DNA ligase family. LigA subfamily. It depends on Mg(2+) as a cofactor. Mn(2+) is required as a cofactor.

It catalyses the reaction NAD(+) + (deoxyribonucleotide)n-3'-hydroxyl + 5'-phospho-(deoxyribonucleotide)m = (deoxyribonucleotide)n+m + AMP + beta-nicotinamide D-nucleotide.. DNA ligase that catalyzes the formation of phosphodiester linkages between 5'-phosphoryl and 3'-hydroxyl groups in double-stranded DNA using NAD as a coenzyme and as the energy source for the reaction. It is essential for DNA replication and repair of damaged DNA. In Thioalkalivibrio sulfidiphilus (strain HL-EbGR7), this protein is DNA ligase.